Here is a 197-residue protein sequence, read N- to C-terminus: Ribonuclease HII (197 aa).

The 184-residue stretch at 14–197 folds into the RNase H type-2 domain; sequence GIIAGVDEVG…RKNFAPIRIL (184 aa). Positions 20, 21, and 112 each coordinate a divalent metal cation.

It belongs to the RNase HII family. Mn(2+) serves as cofactor. It depends on Mg(2+) as a cofactor.

It localises to the cytoplasm. The enzyme catalyses Endonucleolytic cleavage to 5'-phosphomonoester.. Its function is as follows. Endonuclease that specifically degrades the RNA of RNA-DNA hybrids. The chain is Ribonuclease HII from Wolbachia pipientis subsp. Culex pipiens (strain wPip).